A 464-amino-acid polypeptide reads, in one-letter code: Cysteine--tRNA ligase (464 aa).

Cys29 lines the Zn(2+) pocket. The short motif at 31–41 (PTVYDFAHIGN) is the 'HIGH' region element. Residues Cys224, His249, and Glu253 each coordinate Zn(2+). Positions 282–286 (KMSKS) match the 'KMSKS' region motif. Lys285 is a binding site for ATP.

It belongs to the class-I aminoacyl-tRNA synthetase family. As to quaternary structure, monomer. Zn(2+) serves as cofactor.

It is found in the cytoplasm. It catalyses the reaction tRNA(Cys) + L-cysteine + ATP = L-cysteinyl-tRNA(Cys) + AMP + diphosphate. The sequence is that of Cysteine--tRNA ligase from Afipia carboxidovorans (strain ATCC 49405 / DSM 1227 / KCTC 32145 / OM5) (Oligotropha carboxidovorans).